Here is a 319-residue protein sequence, read N- to C-terminus: Thioredoxin reductase (319 aa).

37–44 (ERGVPGGQ) provides a ligand contact to FAD. A disulfide bridge links C136 with C139. 279–288 (DVRAKSLRQI) contacts FAD.

Belongs to the class-II pyridine nucleotide-disulfide oxidoreductase family. As to quaternary structure, homodimer. The cofactor is FAD.

Its subcellular location is the cytoplasm. The catalysed reaction is [thioredoxin]-dithiol + NADP(+) = [thioredoxin]-disulfide + NADPH + H(+). In Listeria innocua serovar 6a (strain ATCC BAA-680 / CLIP 11262), this protein is Thioredoxin reductase (trxB).